Consider the following 592-residue polypeptide: E3 ubiquitin-protein ligase RNF180 (592 aa).

At 1–564 the chain is on the cytoplasmic side; the sequence is MKRSEESTST…DSRGWWFDMD (564 aa). S231 carries the phosphoserine modification. The tract at residues 282–489 is interaction with ZIC2; it reads QSPPSFDPNM…VFLQTELNNA (208 aa). The RING-type zinc-finger motif lies at 432 to 474; it reads CAVCLDVYFNPYMCYPCHHIFCEPCLRTLAKDNPASTPCPLCR. The chain crosses the membrane as a helical span at residues 565-585; it reads MVIIYIYSVNWVIGFVVFCFL. Residues 586 to 592 lie on the Extracellular side of the membrane; the sequence is CYFFFPF.

Interacts with ZIC2. As to expression, brain, kidney, testis and uterus. membrane protein. Nucleus envelope.

The protein localises to the endoplasmic reticulum membrane. The protein resides in the nucleus envelope. It carries out the reaction S-ubiquitinyl-[E2 ubiquitin-conjugating enzyme]-L-cysteine + [acceptor protein]-L-lysine = [E2 ubiquitin-conjugating enzyme]-L-cysteine + N(6)-ubiquitinyl-[acceptor protein]-L-lysine.. It participates in protein modification; protein ubiquitination. Its function is as follows. E3 ubiquitin-protein ligase which promotes polyubiquitination and degradation by the proteasome pathway of ZIC2. In Mus musculus (Mouse), this protein is E3 ubiquitin-protein ligase RNF180 (Rnf180).